The chain runs to 234 residues: uncharacterized protein (234 aa).

Residue 68–70 participates in L-glutamine binding; it reads GES. C101 functions as the Nucleophile in the catalytic mechanism. Residues R131 and 167–168 each bind L-glutamine; that span reads IR. Active-site charge relay system residues include H208 and E210.

This sequence belongs to the glutaminase PdxT/SNO family.

The protein resides in the cytoplasm. It carries out the reaction L-glutamine + H2O = L-glutamate + NH4(+). This is an uncharacterized protein from Schizosaccharomyces pombe (strain 972 / ATCC 24843) (Fission yeast).